The following is a 268-amino-acid chain: Putative ABC transporter ATP-binding protein LMOf2365_1216 (268 aa).

In terms of domain architecture, ABC transporter spans 2 to 237 (LKTEHISFQY…KSNVEQAGLV (236 aa)). ATP is bound at residue 35–42 (GANGSGKS).

Belongs to the ABC transporter superfamily.

It localises to the cell membrane. In terms of biological role, probably part of an ABC transporter complex. Responsible for energy coupling to the transport system. The sequence is that of Putative ABC transporter ATP-binding protein LMOf2365_1216 from Listeria monocytogenes serotype 4b (strain F2365).